Reading from the N-terminus, the 172-residue chain is SsrA-binding protein (172 aa).

Belongs to the SmpB family.

Its subcellular location is the cytoplasm. Required for rescue of stalled ribosomes mediated by trans-translation. Binds to transfer-messenger RNA (tmRNA), required for stable association of tmRNA with ribosomes. tmRNA and SmpB together mimic tRNA shape, replacing the anticodon stem-loop with SmpB. tmRNA is encoded by the ssrA gene; the 2 termini fold to resemble tRNA(Ala) and it encodes a 'tag peptide', a short internal open reading frame. During trans-translation Ala-aminoacylated tmRNA acts like a tRNA, entering the A-site of stalled ribosomes, displacing the stalled mRNA. The ribosome then switches to translate the ORF on the tmRNA; the nascent peptide is terminated with the 'tag peptide' encoded by the tmRNA and targeted for degradation. The ribosome is freed to recommence translation, which seems to be the essential function of trans-translation. In Dehalococcoides mccartyi (strain CBDB1), this protein is SsrA-binding protein.